The chain runs to 202 residues: Securin (202 aa).

Residues 1–92 (MATLIYVDKE…QKQPSFSAKK (92 aa)) are disordered. Position 2 is an N-acetylalanine (alanine 2). Residues 61–64 (RKAL) carry the D-box motif. 2 consecutive short sequence motifs (TEK-box) follow at residues 71–73 (TEK) and 94–96 (TEK). The short motif at 163-173 (XPSPVKMPSPP) is the SH3-binding element. Serine 165 carries the post-translational modification Phosphoserine; by CDK1.

This sequence belongs to the securin family. In terms of assembly, interacts with RPS10 and DNAJA1. Interacts with the caspase-like ESPL1, and prevents its protease activity probably by covering its active site. Interacts with TP53 and blocks its activity probably by blocking its binding to DNA. Interacts with the Ku 70 kDa subunit of ds-DNA kinase. Interacts with PTTG1IP. Phosphorylated at Ser-165 by CDK1 during mitosis. In terms of processing, phosphorylated in vitro by ds-DNA kinase. Post-translationally, ubiquitinated through 'Lys-11' linkage of ubiquitin moieties by the anaphase promoting complex (APC) at the onset of anaphase, conducting to its degradation. 'Lys-11'-linked ubiquitination is mediated by the E2 ligase UBE2C/UBCH10.

Its subcellular location is the cytoplasm. The protein localises to the nucleus. Functionally, regulatory protein, which plays a central role in chromosome stability, in the p53/TP53 pathway, and DNA repair. Probably acts by blocking the action of key proteins. During the mitosis, it blocks Separase/ESPL1 function, preventing the proteolysis of the cohesin complex and the subsequent segregation of the chromosomes. At the onset of anaphase, it is ubiquitinated, conducting to its destruction and to the liberation of ESPL1. Its function is however not limited to a blocking activity, since it is required to activate ESPL1. Negatively regulates the transcriptional activity and related apoptosis activity of TP53. The negative regulation of TP53 may explain the strong transforming capability of the protein when it is overexpressed. May also play a role in DNA repair via its interaction with Ku, possibly by connecting DNA damage-response pathways with sister chromatid separation. This Pan troglodytes (Chimpanzee) protein is Securin (PTTG1).